The following is a 608-amino-acid chain: Protoheme IX farnesyltransferase (608 aa).

The segment at 1–338 is COX15/CtaA; the sequence is MKTPAWSRLA…DYLALTKPRV (338 aa). Helical transmembrane passes span 10-30, 67-87, 99-119, 139-159, 167-187, 220-240, 252-272, 277-297, 338-357, 362-384, 411-431, 432-452, 460-480, 488-508, 530-550, 555-575, and 584-604; these read AGYA…GAYV, ATSG…LRAF, LALF…LFGW, TYFL…GGPL, VGLA…SGAV, VLHP…GYLV, LAQG…INVA, VWMQ…FVFL, VISL…AKGW, VFLA…NMVV, LLFA…GANL, LAAT…TLYL, IVIG…AVTG, YLFA…ALMI, VIQI…PLLL, LLYL…SLAL, and AVSL…AMAV. Residues 339 to 608 are protoheme IX prenyltransferase; sequence ISLLLFTALF…FAAMAVDRAV (270 aa).

It in the N-terminal section; belongs to the COX15/CtaA family. In the C-terminal section; belongs to the UbiA prenyltransferase family. Protoheme IX farnesyltransferase subfamily.

It localises to the cell inner membrane. It carries out the reaction heme b + (2E,6E)-farnesyl diphosphate + H2O = Fe(II)-heme o + diphosphate. It functions in the pathway porphyrin-containing compound metabolism; heme O biosynthesis; heme O from protoheme: step 1/1. In terms of biological role, converts heme B (protoheme IX) to heme O by substitution of the vinyl group on carbon 2 of heme B porphyrin ring with a hydroxyethyl farnesyl side group. The sequence is that of Protoheme IX farnesyltransferase (ctaB) from Thermus thermophilus (strain ATCC 27634 / DSM 579 / HB8).